The chain runs to 98 residues: uncharacterized protein (98 aa).

Residues 1–85 enclose the STAS domain; it reads MLETVPVRCV…GTLKQALENM (85 aa).

In terms of processing, phosphorylated on threonine residue(s). Phosphorylated by PrkC and dephosphorylated by PrpC.

The protein localises to the cytoplasm. This is an uncharacterized protein from Bacillus subtilis (strain 168).